A 432-amino-acid chain; its full sequence is Phosphomethylpyrimidine synthase (432 aa).

Substrate-binding positions include Asn-66, Met-95, Tyr-124, His-163, 185–187 (SRG), 226–229 (DGLR), and Glu-265. His-269 is a Zn(2+) binding site. Tyr-292 is a binding site for substrate. His-333 is a Zn(2+) binding site. Cys-409, Cys-412, and Cys-416 together coordinate [4Fe-4S] cluster.

Belongs to the ThiC family. The cofactor is [4Fe-4S] cluster.

It carries out the reaction 5-amino-1-(5-phospho-beta-D-ribosyl)imidazole + S-adenosyl-L-methionine = 4-amino-2-methyl-5-(phosphooxymethyl)pyrimidine + CO + 5'-deoxyadenosine + formate + L-methionine + 3 H(+). It functions in the pathway cofactor biosynthesis; thiamine diphosphate biosynthesis. In terms of biological role, catalyzes the synthesis of the hydroxymethylpyrimidine phosphate (HMP-P) moiety of thiamine from aminoimidazole ribotide (AIR) in a radical S-adenosyl-L-methionine (SAM)-dependent reaction. In Caldanaerobacter subterraneus subsp. tengcongensis (strain DSM 15242 / JCM 11007 / NBRC 100824 / MB4) (Thermoanaerobacter tengcongensis), this protein is Phosphomethylpyrimidine synthase.